A 474-amino-acid chain; its full sequence is MLKIFNTLTKKKEIFKSIKCGEIKIYVCGITVYDLCHLGHARTFVIFDTILRYLKHYGYQVKYVRNITDIDDKIIQRAIKNNETTDHLASRMIQEMYLDLDILNILRPNYEPKVTDHIELIINFIRLLIERNHAYVTSDGNVMFSIQTVYNYGVLSCHKKNQTFTQRNIRNKMIKKDPVDFVLWKTAKSGEPYWISPWGKGRPGWHIECSAISHAFLGKHIDIHGGGSDLVFPHHENEIAQSTCAHHITVDSYVNTWIHTGMLTFNDEKMSKSLNNFFTIREIIQKYDPETIRYFLLSAHYRKPLRYSDNNIKNARLSLKHLYSALHGINFNPIVQLYDNNSEKYFISKFNNKMNNDFNFPEAYSILFEMAHALNIAKIKDHVRAKSLAAHLKYLANILGILYQDPEIYLGYNTCIKNNKQSLTVEKIRELIYMRENARKNKEWQLSDKIRKRLTEIGIILEDKPTGKTIWRYN.

Zn(2+) is bound at residue cysteine 28. The 'HIGH' region motif lies at 30 to 40 (ITVYDLCHLGH). Zn(2+) is bound by residues cysteine 209, histidine 234, and glutamate 238. Positions 269 to 273 (KMSKS) match the 'KMSKS' region motif. Position 272 (lysine 272) interacts with ATP.

It belongs to the class-I aminoacyl-tRNA synthetase family. Monomer. The cofactor is Zn(2+).

The protein resides in the cytoplasm. The catalysed reaction is tRNA(Cys) + L-cysteine + ATP = L-cysteinyl-tRNA(Cys) + AMP + diphosphate. This chain is Cysteine--tRNA ligase, found in Blochmanniella floridana.